Here is a 260-residue protein sequence, read N- to C-terminus: Centromere protein K (260 aa).

Residues 84–173 (EEELQKVKKE…KKLMNALGEF (90 aa)) are a coiled coil.

Belongs to the CENP-K/MCM22 family. Component of the CENPA-HI complex, at least composed of CENPH, CENPI, CENPK, CENPL, CENPM, CENPO and CENPP.

The protein localises to the nucleus. It localises to the chromosome. It is found in the centromere. The protein resides in the kinetochore. In terms of biological role, component of the CENPA-HI complex, a centromeric complex involved in assembly of kinetochore proteins, mitotic progression and chromosome segregation. The sequence is that of Centromere protein K (CENPK) from Gallus gallus (Chicken).